The sequence spans 100 residues: Urease subunit gamma (100 aa).

This sequence belongs to the urease gamma subunit family. Heterotrimer of UreA (gamma), UreB (beta) and UreC (alpha) subunits. Three heterotrimers associate to form the active enzyme.

Its subcellular location is the cytoplasm. It catalyses the reaction urea + 2 H2O + H(+) = hydrogencarbonate + 2 NH4(+). It functions in the pathway nitrogen metabolism; urea degradation; CO(2) and NH(3) from urea (urease route): step 1/1. In Flavobacterium johnsoniae (strain ATCC 17061 / DSM 2064 / JCM 8514 / BCRC 14874 / CCUG 350202 / NBRC 14942 / NCIMB 11054 / UW101) (Cytophaga johnsonae), this protein is Urease subunit gamma.